The following is a 102-amino-acid chain: Large ribosomal subunit protein bL21 (102 aa).

It belongs to the bacterial ribosomal protein bL21 family. In terms of assembly, part of the 50S ribosomal subunit. Contacts protein L20.

In terms of biological role, this protein binds to 23S rRNA in the presence of protein L20. The polypeptide is Large ribosomal subunit protein bL21 (Finegoldia magna (strain ATCC 29328 / DSM 20472 / WAL 2508) (Peptostreptococcus magnus)).